Here is a 502-residue protein sequence, read N- to C-terminus: Cysteine--tRNA ligase (502 aa).

C30 serves as a coordination point for Zn(2+). The short motif at 32–42 (PTIYDYAHIGN) is the 'HIGH' region element. 3 residues coordinate Zn(2+): C224, H263, and E267. The 'KMSKS' region signature appears at 296 to 300 (KMSKS). K299 contacts ATP.

It belongs to the class-I aminoacyl-tRNA synthetase family. As to quaternary structure, monomer. Zn(2+) is required as a cofactor.

It is found in the cytoplasm. It carries out the reaction tRNA(Cys) + L-cysteine + ATP = L-cysteinyl-tRNA(Cys) + AMP + diphosphate. The protein is Cysteine--tRNA ligase of Bartonella quintana (strain Toulouse) (Rochalimaea quintana).